Consider the following 520-residue polypeptide: Glutamate--cysteine ligase (520 aa).

Belongs to the glutamate--cysteine ligase type 1 family. Type 1 subfamily.

The catalysed reaction is L-cysteine + L-glutamate + ATP = gamma-L-glutamyl-L-cysteine + ADP + phosphate + H(+). Its pathway is sulfur metabolism; glutathione biosynthesis; glutathione from L-cysteine and L-glutamate: step 1/2. This Serratia proteamaculans (strain 568) protein is Glutamate--cysteine ligase.